Here is a 461-residue protein sequence, read N- to C-terminus: Acetylcholine receptor subunit alpha (461 aa).

The N-terminal stretch at 1–24 is a signal peptide; it reads MILCSYWHVGLVLLLFSCCGLVLG. Topologically, residues 25 to 234 are extracellular; it reads SEHETRLVAN…ITYHFIMQRI (210 aa). Intrachain disulfides connect Cys152-Cys166 and Cys216-Cys217. An N-linked (GlcNAc...) asparagine glycan is attached at Asn165. A run of 3 helical transmembrane segments spans residues 235–259, 267–285, and 301–320; these read PLYFVVNVIIPCLLFSFLTVLVFYL, MTLSISVLLSLTVFLLVIV, and YMLFTMIFVISSIIVTVVVI. Topologically, residues 321 to 432 are cytoplasmic; it reads NTHHRSPSTH…WKYVAMVIDH (112 aa). A helical membrane pass occupies residues 433–451; that stretch reads ILLCVFMLICIIGTVSVFA.

The protein belongs to the ligand-gated ion channel (TC 1.A.9) family. Acetylcholine receptor (TC 1.A.9.1) subfamily. Alpha-1/CHRNA1 sub-subfamily. As to quaternary structure, pentamer of two alpha chains, and one each of the beta, delta, and gamma chains.

The protein resides in the postsynaptic cell membrane. It localises to the cell membrane. It carries out the reaction K(+)(in) = K(+)(out). It catalyses the reaction Na(+)(in) = Na(+)(out). Functionally, upon acetylcholine binding, the AChR responds by an extensive change in conformation that affects all subunits and leads to opening of an ion-conducting channel across the plasma membrane. The chain is Acetylcholine receptor subunit alpha (CHRNA1) from Torpedo marmorata (Marbled electric ray).